Here is a 732-residue protein sequence, read N- to C-terminus: MRIALVATLVLTSGIANADEGQWQPYQMPSIADKLSERGIDIPAEKLADLTSYPMNAVVGLGYCTASFVSPQGLVVTNHHCAYKAIQYNTKQEHNYLEQGFLATSMDKEPSAGPNERLYITEAVTDVTKDVTKELSQDPLTRYEEIQNNSKALIKNCEVDDNYRCNVRSFHNGLEYYLIKQLMIRDVRLVYAPPESVGGYGGDIDNYEYPRHSGDFAFLRAYVGKDGKPAAYAEDNIPYKPKSYLKVNADGVKAGDGVFVAGYPGTTSRYNLTSELKFASDWLYPTQAKRYQLQIDTINAMGQEDADIAIKYAGNMASMANRMKKLNGLLAGFKATDIIGIKQSREDNFLAWLKQNPKLNQNLIAELEVLLAEQQQVFQSNYYFTNAQSSTLLTAANSLYRLAKEKQKSDAEREIGYQERDLAMFSSRLKRIDSSFHVDVDKTLWQQDLRAYLAQPNRIAALDDALDLNNKETNLEAKLDGLYSLTTLTDQAQRLAWMDADTTTFETSTDPFIRLAVALYDTNMAQEKAEKILDGKLSTARPDYMAAVIEYYKANNWPVYPDANGTLRISYGMVDGYQSRDALYKQPFTRLDGIVAKHTGAEPYNAPQKLLDAISEQRFGDHLVKSVYQDPRGWICRLFSCLDKPEEFNSVPVNFLSSVDTTGGNSGSPVFNGKGELVGLNFDSTYEAITKDWFFNPTITRAVHVDIRYILWMMDKVDHADNLIKELDLVRN.

The signal sequence occupies residues 1 to 18 (MRIALVATLVLTSGIANA). Catalysis depends on charge relay system residues His-80, Asp-215, and Ser-666.

It belongs to the peptidase S46 family.

Catalyzes the removal of dipeptides from the N-terminus of oligopeptides. Shows a strict specificity for acidic residues (Asp or Glu) in the P1 position, and has probably a hydrophobic residue preference at the P2 position. Preferentially cleaves the synthetic substrate Leu-Glu-methylcoumaryl-7-amide (Leu-Glu-MCA) as compared to Leu-Asp-MCA. This chain is Asp/Glu-specific dipeptidyl-peptidase (dpp11), found in Shewanella putrefaciens (strain CN-32 / ATCC BAA-453).